A 917-amino-acid chain; its full sequence is Hexokinase HKDC1 (917 aa).

Residues 1 to 20 are mitochondrial-binding peptide (MBP); it reads MFAVHLMAFYFSKLKEDQIK. Hexokinase domains follow at residues 16–458 and 464–905; these read EDQI…MVTA and QAQR…LITA. ATP contacts are provided by residues arginine 30 and 84–89; that span reads DLGGSK. The segment at 73–207 is hexokinase small subdomain 1; sequence DGSENGEFLS…DMDVDILALV (135 aa). 84–91 is a D-glucose 6-phosphate binding site; that stretch reads DLGGSKFR. Residues serine 155, 172-173, and 208-209 each bind D-glucose; these read TK and ND. The tract at residues 208-447 is hexokinase large subdomain 1; it reads NDTVGTMMTC…CDVRFLLSES (240 aa). Aspartate 209 and threonine 232 together coordinate D-glucose 6-phosphate. D-glucose contacts are provided by residues asparagine 235, glutamate 260, and 291 to 294; that span reads QLFE. 413–415 contacts D-glucose 6-phosphate; sequence DGT. ATP is bound at residue 425–426; that stretch reads KR. D-glucose 6-phosphate contacts are provided by residues serine 449 and 532-536; that span reads DLGGT. The hexokinase small subdomain 2 stretch occupies residues 521–654; that stretch reads DGTEKGKFLA…EFDLDIVAVV (134 aa). Position 532-537 (532-537) interacts with ATP; that stretch reads DLGGTN. Residues 602 to 603, 619 to 620, and 655 to 656 each bind D-glucose; these read SF, TK, and ND. Residues 655-894 form a hexokinase large subdomain 2 region; the sequence is NDTVGTMMTC…CDVTFMLSED (240 aa). D-glucose 6-phosphate is bound by residues aspartate 656 and threonine 679. Threonine 679 contacts ATP. D-glucose is bound by residues 681 to 682, glutamate 707, and glutamate 741; that span reads SN. Residues 746 to 747, 783 to 787, and 862 to 866 contribute to the ATP site; these read GM, TKFLS, and TLYKL. D-glucose 6-phosphate is bound by residues 860–862 and serine 896; that span reads DGT.

Belongs to the hexokinase family. In terms of tissue distribution, widely expressed. Highly expressed in the brush border, surface epithelium and the myenteric plexus of the small and large intestines; the acinar centrocytes and interlobular ducts of the pancreas; and the alveolar macrophages in the lungs (at protein level). Present at moderate level in the thyroid follicular epithelium (at protein level).

The protein localises to the cytoplasm. The protein resides in the mitochondrion membrane. It is found in the photoreceptor inner segment. It catalyses the reaction a D-hexose + ATP = a D-hexose 6-phosphate + ADP + H(+). The enzyme catalyses D-glucose + ATP = D-glucose 6-phosphate + ADP + H(+). It participates in carbohydrate metabolism; hexose metabolism. It functions in the pathway carbohydrate degradation; glycolysis; D-glyceraldehyde 3-phosphate and glycerone phosphate from D-glucose: step 1/4. In terms of biological role, catalyzes the phosphorylation of hexose to hexose 6-phosphate, although at very low level compared to other hexokinases. Has low glucose phosphorylating activity compared to other hexokinases. Involved in glucose homeostasis and hepatic lipid accumulation. Required to maintain whole-body glucose homeostasis during pregnancy; however additional evidences are required to confirm this role. The protein is Hexokinase HKDC1 of Homo sapiens (Human).